The primary structure comprises 279 residues: MSTNNLDIKLNCNSSGQTIVTHQYTTHPLRLSGVFRLDTTDPRTAYLYLINTSPGLLAGDNLSLSLQLEKGTSVYLTDQAAIKVHAMPMTTTKANTNIKIKVEAGARLELVAEPIILFADAALEQTTYIQLHSRAELFWSEIILPGRLARGEWYEFRYYLSQLEITSMTEEICFRDAIHLEGKQNIFKHRDLFAAKPVLANLIVVQPHSDLEVLSQKLENLEAANCPDLLLGSSILPNNKGLLLRALASKTPQIKKYIKYALNCVRNLTNRSSLPYISK.

The protein belongs to the UreD family. As to quaternary structure, ureD, UreF and UreG form a complex that acts as a GTP-hydrolysis-dependent molecular chaperone, activating the urease apoprotein by helping to assemble the nickel containing metallocenter of UreC. The UreE protein probably delivers the nickel.

It is found in the cytoplasm. In terms of biological role, required for maturation of urease via the functional incorporation of the urease nickel metallocenter. This chain is Urease accessory protein UreD, found in Trichodesmium erythraeum (strain IMS101).